Here is a 285-residue protein sequence, read N- to C-terminus: Putative hydrolase DDAH2 (285 aa).

Residue His-171 is the Proton donor of the active site. The Nucleophile role is filled by Cys-276.

Belongs to the DDAH family. Phosphorylated by TBK1. Phosphorylation inhibits the translocation into the mitochondrion upon Sendai viral infection. As to expression, detected in heart, placenta, lung, liver, skeletal muscle, kidney and pancreas, and at very low levels in brain.

The protein resides in the cytoplasm. It is found in the mitochondrion. Functionally, putative hydrolase with unknown substrate. Does not hydrolyze N(G),N(G)-dimethyl-L-arginine (ADMA) which acts as an inhibitor of NOS. In endothelial cells, induces expression of vascular endothelial growth factor (VEGF) via phosphorylation of the transcription factor SP1 by PKA in a process that is independent of NO and NO synthase. Similarly, enhances pancreatic insulin secretion through SP1-mediated transcriptional up-regulation of secretagogin/SCGN, an insulin vesicle docking protein. Upon viral infection, relocates to mitochondria where it promotes mitochondrial fission through activation of DNM1L leading to the inhibition of innate response activation mediated by MAVS. The chain is Putative hydrolase DDAH2 from Homo sapiens (Human).